The primary structure comprises 98 residues: Large ribosomal subunit protein uL23 (98 aa).

The protein belongs to the universal ribosomal protein uL23 family. Part of the 50S ribosomal subunit. Contacts protein L29, and trigger factor when it is bound to the ribosome.

One of the early assembly proteins it binds 23S rRNA. One of the proteins that surrounds the polypeptide exit tunnel on the outside of the ribosome. Forms the main docking site for trigger factor binding to the ribosome. The sequence is that of Large ribosomal subunit protein uL23 from Ruegeria sp. (strain TM1040) (Silicibacter sp.).